The chain runs to 651 residues: Threonine--tRNA ligase (651 aa).

The TGS domain occupies 1–61 (MPTIQLPDGS…DKDVSLRIIT (61 aa)). Residues 242–533 (DHRLLAKKMD…LLEESAGKLP (292 aa)) are catalytic. 3 residues coordinate Zn(2+): cysteine 333, histidine 384, and histidine 510. The segment at 631–651 (ISQRSRKSPAPSPLFPVGGES) is disordered.

It belongs to the class-II aminoacyl-tRNA synthetase family. Homodimer. Requires Zn(2+) as cofactor.

Its subcellular location is the cytoplasm. The enzyme catalyses tRNA(Thr) + L-threonine + ATP = L-threonyl-tRNA(Thr) + AMP + diphosphate + H(+). In terms of biological role, catalyzes the attachment of threonine to tRNA(Thr) in a two-step reaction: L-threonine is first activated by ATP to form Thr-AMP and then transferred to the acceptor end of tRNA(Thr). Also edits incorrectly charged L-seryl-tRNA(Thr). The protein is Threonine--tRNA ligase of Coxiella burnetii (strain RSA 493 / Nine Mile phase I).